We begin with the raw amino-acid sequence, 364 residues long: Chorismate synthase (364 aa).

NADP(+)-binding residues include arginine 48 and arginine 54. FMN contacts are provided by residues 125–127 (RSS), glycine 282, 297–301 (KPPAS), and arginine 323.

The protein belongs to the chorismate synthase family. Homotetramer. FMNH2 serves as cofactor.

It catalyses the reaction 5-O-(1-carboxyvinyl)-3-phosphoshikimate = chorismate + phosphate. It participates in metabolic intermediate biosynthesis; chorismate biosynthesis; chorismate from D-erythrose 4-phosphate and phosphoenolpyruvate: step 7/7. Catalyzes the anti-1,4-elimination of the C-3 phosphate and the C-6 proR hydrogen from 5-enolpyruvylshikimate-3-phosphate (EPSP) to yield chorismate, which is the branch point compound that serves as the starting substrate for the three terminal pathways of aromatic amino acid biosynthesis. This reaction introduces a second double bond into the aromatic ring system. The chain is Chorismate synthase from Chloroflexus aurantiacus (strain ATCC 29366 / DSM 635 / J-10-fl).